The primary structure comprises 361 residues: Phospho-N-acetylmuramoyl-pentapeptide-transferase (361 aa).

The next 10 membrane-spanning stretches (helical) occupy residues Gly-27 to Leu-47, Thr-72 to Ala-92, Val-99 to Leu-119, Leu-135 to Ala-155, Ala-169 to Gly-189, Gly-200 to Val-220, Leu-240 to Pro-260, Ile-264 to Ala-284, Ile-289 to Val-309, and Gln-338 to Leu-358.

It belongs to the glycosyltransferase 4 family. MraY subfamily. Requires Mg(2+) as cofactor.

The protein localises to the cell inner membrane. It catalyses the reaction UDP-N-acetyl-alpha-D-muramoyl-L-alanyl-gamma-D-glutamyl-meso-2,6-diaminopimeloyl-D-alanyl-D-alanine + di-trans,octa-cis-undecaprenyl phosphate = di-trans,octa-cis-undecaprenyl diphospho-N-acetyl-alpha-D-muramoyl-L-alanyl-D-glutamyl-meso-2,6-diaminopimeloyl-D-alanyl-D-alanine + UMP. It functions in the pathway cell wall biogenesis; peptidoglycan biosynthesis. In terms of biological role, catalyzes the initial step of the lipid cycle reactions in the biosynthesis of the cell wall peptidoglycan: transfers peptidoglycan precursor phospho-MurNAc-pentapeptide from UDP-MurNAc-pentapeptide onto the lipid carrier undecaprenyl phosphate, yielding undecaprenyl-pyrophosphoryl-MurNAc-pentapeptide, known as lipid I. The protein is Phospho-N-acetylmuramoyl-pentapeptide-transferase of Methylobacterium radiotolerans (strain ATCC 27329 / DSM 1819 / JCM 2831 / NBRC 15690 / NCIMB 10815 / 0-1).